Consider the following 820-residue polypeptide: Sucrose synthase 2 (820 aa).

The tract at residues 276–753 is GT-B glycosyltransferase; the sequence is MVFNVVILSP…GLKRIYEKYT (478 aa).

It belongs to the glycosyltransferase 1 family. Plant sucrose synthase subfamily.

The enzyme catalyses an NDP-alpha-D-glucose + D-fructose = a ribonucleoside 5'-diphosphate + sucrose + H(+). In terms of biological role, sucrose-cleaving enzyme that provides UDP-glucose and fructose for various metabolic pathways. In Tulipa gesneriana (Garden tulip), this protein is Sucrose synthase 2.